A 223-amino-acid chain; its full sequence is Deoxyribose-phosphate aldolase (223 aa).

The active-site Proton donor/acceptor is Asp-91. Lys-153 acts as the Schiff-base intermediate with acetaldehyde in catalysis. Lys-182 acts as the Proton donor/acceptor in catalysis.

Belongs to the DeoC/FbaB aldolase family. DeoC type 1 subfamily.

Its subcellular location is the cytoplasm. The enzyme catalyses 2-deoxy-D-ribose 5-phosphate = D-glyceraldehyde 3-phosphate + acetaldehyde. The protein operates within carbohydrate degradation; 2-deoxy-D-ribose 1-phosphate degradation; D-glyceraldehyde 3-phosphate and acetaldehyde from 2-deoxy-alpha-D-ribose 1-phosphate: step 2/2. In terms of biological role, catalyzes a reversible aldol reaction between acetaldehyde and D-glyceraldehyde 3-phosphate to generate 2-deoxy-D-ribose 5-phosphate. This is Deoxyribose-phosphate aldolase from Yersinia enterocolitica serotype O:8 / biotype 1B (strain NCTC 13174 / 8081).